We begin with the raw amino-acid sequence, 763 residues long: MKGGALHCRCSKCFAAPPKRRVKRRPRVLTLLSLPEDVLLYVLECLPAVDILSMREVHPHLRSLVDSHSSVWARASFQDVWPSPENLNLFERAAECGNFEACVKLGIAYLYNEGLSLSDDGRAEVNGLKASRFFSLTERLNSGADPFVWLFIRPPWSSSGSCCKAVVFDSLKEECGTVTSEEGATGALKGSIQYCLAKVLSLFEDDDKKREALGMLESSASHGCLHSSYLLWETKQKTALSDPGRYLQSFRQLRDYAARGCWDAQISLAKACGHKNQLSQEQRSASELVNQVFQSSLPINKTSIFTTQKGMNDTMRYILIDWLVEVATMKDFSSLCLHMTVGLVDRYLKLRSVPRAKLQLVGIACMVICTRFISKEILTIREAVWLTDNTYKYEDLVRMMGEIISALEGKIRMPTVVDYKDVLSHLIPLDRSTLHLCSYISELSLLYTELSTYSPAQLAAGALLLARILHKQARPWPAQLAETTGFTLEHLTPCVVLLHKKCFHDDAPKDYRQVSLTAVKQRFQDDLYDQISKEKVMDHSHLCELLGVPCRDSESPASCPNAADFHQFLCSPSGSKTKRRREDSIQEDRGSFVTTPTAELSNQEEDLLGDFLDWSLETSCSGYEGDRESEGEREGEVTAPSGVLDLSLLITEHQQCQDTTSDDDSLVPLHPIPLLSKLENGTHSTEGCAEKSSGYSSVSSGGSPTSSSSPPGLPFTPTPGLNHSKLMPIPFPQPCSPLFKASRRQVKRKNQAQHSEDNLSDEL.

A Nuclear localization signal 1 motif is present at residues 19 to 27; it reads KRRVKRRPR. The region spanning 28-75 is the F-box domain; it reads VLTLLSLPEDVLLYVLECLPAVDILSMREVHPHLRSLVDSHSSVWARA. The 113-residue stretch at 299–411 folds into the Cyclin N-terminal domain; sequence INKTSIFTTQ…EIISALEGKI (113 aa). 2 short sequence motifs (d box) span residues 316–319 and 355–358; these read RYIL and RAKL. Disordered regions lie at residues 574–600 and 677–763; these read GSKT…TAEL and KLEN…SDEL. The Nuclear localization signal 2 signature appears at 575–581; sequence SKTKRRR. The segment covering 580–590 has biased composition (basic and acidic residues); sequence RREDSIQEDRG. The PEST stretch occupies residues 589–747; it reads RGSFVTTPTA…LFKASRRQVK (159 aa). The segment covering 692–710 has biased composition (low complexity); that stretch reads SSGYSSVSSGGSPTSSSSP. Residues 741–751 are compositionally biased toward basic residues; it reads ASRRQVKRKNQ.

This sequence belongs to the cyclin family. Cyclin AB subfamily. As to quaternary structure, component of the SCF(CCNF) complex.

Its subcellular location is the nucleus. It is found in the cytoplasm. The protein resides in the perinuclear region. It localises to the cytoskeleton. The protein localises to the microtubule organizing center. Its subcellular location is the centrosome. It is found in the centriole. Substrate recognition component of the SCF(CCNF) E3 ubiquitin-protein ligase complex which mediates the ubiquitination and subsequent proteasomal degradation of target proteins. The SCF(CCNF) E3 ubiquitin-protein ligase complex is an integral component of the ubiquitin proteasome system (UPS) and links proteasome degradation to the cell cycle. Mediates the substrate recognition and the proteasomal degradation of various target proteins during G2 phase involved in the regulation of cell cycle progression and in the maintenance of genome stability. This is Cyclin-F (ccnf) from Xenopus tropicalis (Western clawed frog).